A 122-amino-acid chain; its full sequence is MIQPQSYLNVADNSGARKLMCIRVLGSSNRKYAHIGDMVIAVVKETVPNMPLKKSEIVRAVIVRTRKGLKRDNGMVLRFDDNAAVVINQEGNPRGTRVFGPVARELRDLNFTKIVSLAPEVL.

This sequence belongs to the universal ribosomal protein uL14 family. As to quaternary structure, part of the 50S ribosomal subunit.

The protein resides in the plastid. The protein localises to the chloroplast. Functionally, binds to 23S rRNA. The chain is Large ribosomal subunit protein uL14c from Zygnema circumcarinatum (Green alga).